Here is a 459-residue protein sequence, read N- to C-terminus: MDQSARYADLSLKEEDLIKGGRHILVAYKMKPKSGYGYLEAAAHFAAESSTGTNVEVSTTDDFTKGVDALVYYIDEASEDMRIAYPLELFDRNVTDGRFMLVSFLTLAIGNNQGMGDIEHAKMIDFYVPERCIQMFDGPATDISNLWRILGRPVVNGGYIAGTIIKPKLGLRPEPFAKAAYQFWLGGDFIKNDEPQGNQVFCPLKKVLPLVYDAMKRAQDDTGQAKLFSMNITADDHYEMCARADYALEVFGPDADKLAFLVDGYVGGPGMVTTARRQYPGQYLHYHRAGHGAVTSPSAKRGYTAFVLAKMSRLQGASGIHVGTMGYGKMEGEGDDKIIAYMIERDECQGPVYFQKWYGMKPTTPIISGGMNALRLPGFFENLGHGNVINTAGGGSYGHIDSPAAGAISLRQSYECWKQGADPIEFAKEHKEFARAFESFPKDADKLFPGWREKLGVHK.

Residue asparagine 111 participates in substrate binding. Lysine 166 acts as the Proton acceptor in catalysis. Substrate is bound at residue lysine 168. Mg(2+) contacts are provided by lysine 191, aspartate 193, and glutamate 194. N6-carboxylysine is present on lysine 191. Residue histidine 287 is the Proton acceptor of the active site. 3 residues coordinate substrate: arginine 288, histidine 321, and serine 368.

Belongs to the RuBisCO large chain family. Type II subfamily. The complex is approximately 350 kDa when isolated from either T.denitrificans or R.sphaeroides, suggesting a homohexamer or homooctamer structure. The cofactor is Mg(2+).

It carries out the reaction 2 (2R)-3-phosphoglycerate + 2 H(+) = D-ribulose 1,5-bisphosphate + CO2 + H2O. The catalysed reaction is D-ribulose 1,5-bisphosphate + O2 = 2-phosphoglycolate + (2R)-3-phosphoglycerate + 2 H(+). RuBisCO catalyzes two reactions: the carboxylation of D-ribulose 1,5-bisphosphate, the primary event in carbon dioxide fixation, as well as the oxidative fragmentation of the pentose substrate. Both reactions occur simultaneously and in competition at the same active site. This Thiobacillus denitrificans (strain ATCC 25259 / T1) protein is Ribulose bisphosphate carboxylase (cbbM).